A 715-amino-acid chain; its full sequence is Palmitoyltransferase ZDHHC5 (715 aa).

Residues 1–13 (MPAESGKRFKPSK) are Cytoplasmic-facing. The helical transmembrane segment at 14–34 (YVPVSAAAIFLVGATTLFFAF) threads the bilayer. Residues 35-38 (TCPG) lie on the Extracellular side of the membrane. The chain crosses the membrane as a helical span at residues 39 to 59 (LSLYVSPAVPIYNAIMFLFVL). Residues 60–148 (ANFSMATFMD…NCIGRRNYRY (89 aa)) are Cytoplasmic-facing. A Phosphotyrosine modification is found at Tyr-91. The DHHC domain occupies 104-154 (KWCATCRFYRPPRCSHCSVCDNCVEEFDHHCPWVNNCIGRRNYRYFFLFLL). The active-site S-palmitoyl cysteine intermediate is the Cys-134. Residues 149-169 (FFLFLLSLTAHIMGVFGFGLL) traverse the membrane as a helical segment. At 170 to 191 (YVLYHIEELSGVRTAVTMAVMC) the chain is on the extracellular side. A helical transmembrane segment spans residues 192 to 212 (VAGLFFIPVAGLTGFHVVLVA). At 213 to 715 (RGRTTNEQVT…VGGTTYEISV (503 aa)) the chain is on the cytoplasmic side. Ser-247 is subject to Phosphoserine. Positions 289-715 (GELRRTKSKG…VGGTTYEISV (427 aa)) are disordered. Thr-294 is modified (phosphothreonine). 2 positions are modified to phosphoserine: Ser-296 and Ser-299. A Phosphothreonine modification is found at Thr-303. Ser-345 is subject to Phosphoserine. Phosphothreonine is present on residues Thr-348 and Thr-350. The span at 359-373 (SSSSTSAAMPHSSSA) shows a compositional bias: low complexity. 4 positions are modified to phosphoserine: Ser-380, Ser-398, Ser-406, and Ser-409. A Phosphothreonine modification is found at Thr-411. 4 positions are modified to phosphoserine: Ser-415, Ser-425, Ser-429, and Ser-432. Positions 422–432 (SSGSRSSSLKS) are enriched in low complexity. The residue at position 436 (Thr-436) is a Phosphothreonine. The span at 442-478 (QLQSIRSEGTTSTSYKSLANQTRNGSLSYDSLLTPSD) shows a compositional bias: polar residues. 2 positions are modified to phosphoserine: Ser-529 and Ser-554. Arg-617 carries the omega-N-methylarginine modification. Ser-621 carries the phosphoserine modification. Position 659 is a phosphothreonine (Thr-659). The span at 666–677 (LKTTYSKSNGQP) shows a compositional bias: polar residues. A phosphoserine mark is found at Ser-684 and Ser-694. Position 697 is an omega-N-methylarginine (Arg-697).

Belongs to the DHHC palmitoyltransferase family. ERF2/ZDHHC9 subfamily.

The protein resides in the cell membrane. The enzyme catalyses L-cysteinyl-[protein] + hexadecanoyl-CoA = S-hexadecanoyl-L-cysteinyl-[protein] + CoA. In terms of biological role, palmitoyltransferase that catalyzes the addition of palmitate onto various protein substrates such as CTNND2, CD36, GSDMD, NLRP3, NOD1, NOD2, STAT3 and S1PR1 thus plays a role in various biological processes including cell adhesion, inflammation, fatty acid uptake, bacterial sensing or cardiac functions. Plays an important role in the regulation of synapse efficacy by mediating palmitoylation of delta-catenin/CTNND2, thereby increasing synaptic delivery and surface stabilization of alpha-amino-3-hydroxy-5-methyl-4-isoxazole propionic acid receptors (AMPARs). Under basal conditions, remains at the synaptic membrane through FYN-mediated phosphorylation that prevents association with endocytic proteins. Neuronal activity enhances the internalization and trafficking of DHHC5 from spines to dendritic shafts where it palmitoylates delta-catenin/CTNND2. Regulates cell adhesion at the plasma membrane by palmitoylating GOLGA7B and DSG2. Plays a role in innate immune response by mediating the palmitoylation of NOD1 and NOD2 and their proper recruitment to the bacterial entry site and phagosomes. Also participates in fatty acid uptake by palmitoylating CD36 and thereby targeting it to the plasma membrane. Upon binding of fatty acids to CD36, gets phosphorylated by LYN leading to inactivation and subsequent CD36 caveolar endocytosis. Controls oligodendrocyte development by catalyzing STAT3 palmitoylation. Acts as a regulator of inflammatory response by mediating palmitoylation of NLRP3 and GSDMD. Palmitoylates NLRP3 to promote inflammasome assembly and activation. Activates pyroptosis by catalyzing palmitoylation of gasdermin-D (GSDMD), thereby promoting membrane translocation and pore formation of GSDMD. The protein is Palmitoyltransferase ZDHHC5 (ZDHHC5) of Pan troglodytes (Chimpanzee).